The primary structure comprises 1216 residues: MPQKINYELKNFGQYTKRRDYSKTRFSLPLTDVLAIQKESFDWFLNKAIEATLRKYYPIKSSNNKVEIKYVLGSKRIEKPLVTEQKAVKEAKQKGISYSARLYVKLQKHITETGEISFDEVILCDIPLMTSSGSFIINGFEKVIVSQLIRSPGAYFAQKTRDKQSDDLFNKVEVLPRIGSWIEIKHKVTSNLDSVKIKIDKHKSFLLTTFLSSFGFTEESMYKLFGNSETLKNTLSKDKILGKNKDIVEIRKEAQENIFRIVRRGDRITKEASQNLISNLLFNEKRYNLSKTGRYMLNRKLSLFDRIITTYLAQDIVLKNVDPTMEAKILYPKGTYITNDIAIEIQNAFKEGLIKNIDLKDYGITSDVYGKLLDTNPKLKNRMNIIGIYIFKSKKAMEKDGEKHFVIGNDPTSVENHLLISDIVAIINYYFNLNENIGRDDDPDSLINKRIVSVGELLLNQLNIGLLKMEKNTREKMSSKEISRITPKNITNNKMIQNQIKTFFNSSKLSQFMDQTNPLSEISTKRKITSLGPGGLNRDTAQFEVRDVHATHYGRICPIETPEGPNIGLILNLATYAKVDEYGFLQTPYFKVTNGIVDFSQPVYLTAHEEINRTFAQSSISIDENGKITDEQVIVKSNFDYNVVSPKEVDYIDVSSKQMTSLAASSIPFLENNDANRALMGSNMQRQAVPLLFAEAPLVATGIEADIAKFSPNNLKSTVDGEVVFVDGSQIKIKDSASEKGSIKTYQLKTFEKTNQGTVISQSPIVKMGDKVLKGDLISDSSSFKDGEMALGKNVLVGFSTWNGYNYEDAIIVSERLVKDDVFTSIHIEEQTIQFRKSKAGDDKLTADIPNASLKSRRHLDENGIVRIGSEVVTGDILVGRVSPKGDENISPAEKLLNGIFNQKISNEKDTSLKVKNGHQGTVIDVEILSRENGNVLEEEIDMMIKVYVAQKRKIKVGDKMAGRHGNKGVISRVLPVEDMPYLEDGTPLDIILNPQGVPSRMNIGQVLELHLGMAAKKLGVKFVSPVFDGVKKADIMDALEEAKLPRTGKMKVFDPTTGEKIDNEISVGVMYMFKLSHMVDDKMHSRSIGPYSLITQQPLGGKSQNGGQRFGEMETWALESYGAANILQEILTYKSDDIQGRNNLYSALTSGTKLPKPGVPESFSVLAYELRGLGIKLQIHEKEEEKQELPSQEYESLNLDQELKTASENVSESEF.

Residues glutamate 1185–phenylalanine 1216 form a disordered region. Residues leucine 1190–phenylalanine 1216 show a composition bias toward polar residues.

The protein belongs to the RNA polymerase beta chain family. In terms of assembly, the RNAP catalytic core consists of 2 alpha, 1 beta, 1 beta' and 1 omega subunit. When a sigma factor is associated with the core the holoenzyme is formed, which can initiate transcription.

It catalyses the reaction RNA(n) + a ribonucleoside 5'-triphosphate = RNA(n+1) + diphosphate. In terms of biological role, DNA-dependent RNA polymerase catalyzes the transcription of DNA into RNA using the four ribonucleoside triphosphates as substrates. This is DNA-directed RNA polymerase subunit beta from Mycoplasmopsis pulmonis (strain UAB CTIP) (Mycoplasma pulmonis).